The primary structure comprises 396 residues: Lipid-A-disaccharide synthase (396 aa).

This sequence belongs to the LpxB family.

The catalysed reaction is a lipid X + a UDP-2-N,3-O-bis[(3R)-3-hydroxyacyl]-alpha-D-glucosamine = a lipid A disaccharide + UDP + H(+). It participates in bacterial outer membrane biogenesis; LPS lipid A biosynthesis. Its function is as follows. Condensation of UDP-2,3-diacylglucosamine and 2,3-diacylglucosamine-1-phosphate to form lipid A disaccharide, a precursor of lipid A, a phosphorylated glycolipid that anchors the lipopolysaccharide to the outer membrane of the cell. The chain is Lipid-A-disaccharide synthase from Nitrobacter hamburgensis (strain DSM 10229 / NCIMB 13809 / X14).